The primary structure comprises 436 residues: GTPase Obg (436 aa).

An Obg domain is found at Ser2 to Leu160. Positions Ala161–Asp338 constitute an OBG-type G domain. GTP contacts are provided by residues Gly167–Ser174, Phe192–Val196, Asp214–Gly217, Asn284–Asp287, and Ser319–Leu321. Mg(2+)-binding residues include Ser174 and Thr194. The region spanning Gly358 to Asp436 is the OCT domain.

It belongs to the TRAFAC class OBG-HflX-like GTPase superfamily. OBG GTPase family. In terms of assembly, monomer. Mg(2+) is required as a cofactor.

Its subcellular location is the cytoplasm. Functionally, an essential GTPase which binds GTP, GDP and possibly (p)ppGpp with moderate affinity, with high nucleotide exchange rates and a fairly low GTP hydrolysis rate. Plays a role in control of the cell cycle, stress response, ribosome biogenesis and in those bacteria that undergo differentiation, in morphogenesis control. The sequence is that of GTPase Obg from Streptococcus sanguinis (strain SK36).